Here is a 507-residue protein sequence, read N- to C-terminus: ATP synthase subunit alpha, chloroplastic (507 aa).

170 to 177 serves as a coordination point for ATP; sequence GDRQTGKT.

This sequence belongs to the ATPase alpha/beta chains family. As to quaternary structure, F-type ATPases have 2 components, CF(1) - the catalytic core - and CF(0) - the membrane proton channel. CF(1) has five subunits: alpha(3), beta(3), gamma(1), delta(1), epsilon(1). CF(0) has four main subunits: a, b, b' and c.

It localises to the plastid. The protein resides in the chloroplast thylakoid membrane. The enzyme catalyses ATP + H2O + 4 H(+)(in) = ADP + phosphate + 5 H(+)(out). Functionally, produces ATP from ADP in the presence of a proton gradient across the membrane. The alpha chain is a regulatory subunit. The sequence is that of ATP synthase subunit alpha, chloroplastic from Daucus carota (Wild carrot).